The primary structure comprises 347 residues: NADH-ubiquinone oxidoreductase chain 2 (347 aa).

The next 11 membrane-spanning stretches (helical) occupy residues 1 to 21 (MNPMIFTSLLATIMLGTSIVL), 25 to 45 (HWFLTWLGFEMNMMAIIPVLM), 68 to 88 (MILVLAIIINLMYSGQWTIMI), 96 to 116 (MLITIALVMKLGLAPFHFWVP), 122 to 142 (VSLSSGLILLTWQKIAPLSLL), 145 to 165 (IFPSINTNLLLIMSLLSIMIG), 178 to 198 (IMAYSSIAHMGWMIAIMIYNP), 201 to 221 (SLLNLLIYIMMTSSMFMLLII), 239 to 259 (IVVSTMMVILLSLGGLPPLTG), 274 to 294 (SSVMLPSLMAILALLNLFFYM), and 326 to 346 (MMSLISMSMLALPLAPSLITL).

This sequence belongs to the complex I subunit 2 family. As to quaternary structure, core subunit of respiratory chain NADH dehydrogenase (Complex I) which is composed of 45 different subunits. Interacts with TMEM242.

It localises to the mitochondrion inner membrane. The enzyme catalyses a ubiquinone + NADH + 5 H(+)(in) = a ubiquinol + NAD(+) + 4 H(+)(out). Its function is as follows. Core subunit of the mitochondrial membrane respiratory chain NADH dehydrogenase (Complex I) which catalyzes electron transfer from NADH through the respiratory chain, using ubiquinone as an electron acceptor. Essential for the catalytic activity and assembly of complex I. The chain is NADH-ubiquinone oxidoreductase chain 2 from Sylvisorex lunaris (Moon forest shrew).